The primary structure comprises 341 residues: 4-hydroxy-2-oxovalerate aldolase 2 (341 aa).

The Pyruvate carboxyltransferase domain occupies 8–260; sequence VTVHDMTLRD…ETGVDVAKIT (253 aa). Residue 16–17 participates in substrate binding; sequence RD. Aspartate 17 lines the Mn(2+) pocket. The active-site Proton acceptor is the histidine 20. Serine 170 and histidine 199 together coordinate substrate. Residues histidine 199 and histidine 201 each coordinate Mn(2+). Tyrosine 290 lines the substrate pocket.

It belongs to the 4-hydroxy-2-oxovalerate aldolase family.

The catalysed reaction is (S)-4-hydroxy-2-oxopentanoate = acetaldehyde + pyruvate. This chain is 4-hydroxy-2-oxovalerate aldolase 2, found in Dechloromonas aromatica (strain RCB).